The chain runs to 164 residues: Protein DOWNSTREAM OF FLC (164 aa).

An N-terminal signal peptide occupies residues methionine 1–alanine 23. 3 cysteine pairs are disulfide-bonded: cysteine 36–cysteine 107, cysteine 39–cysteine 148, and cysteine 60–cysteine 95.

This sequence belongs to the Ole e I family.

It is found in the secreted. Functionally, part of a three-gene cluster containing FLC, UFC and DFC, which is coordinately regulated in response to vernalization. Not regulated by FLX. This Arabidopsis thaliana (Mouse-ear cress) protein is Protein DOWNSTREAM OF FLC (DFC).